The chain runs to 205 residues: Ypt/Rab-type GTPase ypt7 (205 aa).

Residues 17–23, 33–40, G66, 125–128, and 157–159 each bind GTP; these read SGVGKTS, FSASYKAT, NKID, and SAK. The Effector region motif lies at 37 to 45; that stretch reads YKATIGADF. Residues C203 and C205 are each lipidated (S-geranylgeranyl cysteine). C205 is modified (cysteine methyl ester).

This sequence belongs to the small GTPase superfamily. Rab family. In terms of assembly, interacts with the Rab GDP dissociation inhibitor GDI1.

Its subcellular location is the vacuole. Rab activation is generally mediated by a guanine exchange factor (GEF), while inactivation through hydrolysis of bound GTP is catalyzed by a GTPase activating protein (GAP). Ypt/Rab-type GTPases are key regulators of membrane trafficking and intracellular vesicular transport. They act as molecular switches that convert between GTP-bound and GDP-bound states, and regulate virtually all steps of membrane traffic from the formation of the transport vesicle at the donor membrane to its fusion at the target membrane. In the GDP-bound state, Ypt proteins are predominantly cytosolic, solubilized through the interaction with a GDP dissociation inhibitor (GDI). In the GTP-bound state, the proteins are membrane bound and interact with specific effector proteins that select cargo, promote vesicle movement, or verify the correct site of fusion. Required for fungal morphogenesis, vacuole fusion, autophagy, stress resistance and pathogenicity. This Pyricularia oryzae (strain 70-15 / ATCC MYA-4617 / FGSC 8958) (Rice blast fungus) protein is Ypt/Rab-type GTPase ypt7.